The primary structure comprises 185 residues: Ribosome-recycling factor (185 aa).

It belongs to the RRF family.

The protein localises to the cytoplasm. Functionally, responsible for the release of ribosomes from messenger RNA at the termination of protein biosynthesis. May increase the efficiency of translation by recycling ribosomes from one round of translation to another. The protein is Ribosome-recycling factor of Zymomonas mobilis subsp. mobilis (strain ATCC 31821 / ZM4 / CP4).